A 117-amino-acid chain; its full sequence is Protein SMALL AUXIN UP-REGULATED RNA 54 (117 aa).

The protein belongs to the ARG7 family. In terms of tissue distribution, expressed in trichomes. Hardly observed in leaves.

Its subcellular location is the cell membrane. Its function is as follows. Provide a mechanistic link between auxin and plasma membrane H(+)-ATPases (PM H(+)-ATPases, e.g. AHA1 and AHA2), and triggers PM H(+)-ATPases activity by promoting phosphorylation of their C-terminal autoinhibitory domain as a result of PP2C-D subfamily of type 2C phosphatases inhibition, thus leading to the acidification of the apoplast and the facilitation of solutes and water uptake to drive cell expansion. Triggers plant growth probably by promoting cell elongation. Regulates branch angles and bending. This is Protein SMALL AUXIN UP-REGULATED RNA 54 from Arabidopsis thaliana (Mouse-ear cress).